A 112-amino-acid polypeptide reads, in one-letter code: Macrodomain Ori protein (112 aa).

Residues 91–112 are disordered; sequence FHTLSGGKPQVEGAEDYTDSDD. The span at 103–112 shows a compositional bias: acidic residues; that stretch reads GAEDYTDSDD.

Belongs to the MaoP family.

In terms of biological role, involved in the organization of the Ori region of the chromosome into a macrodomain (MD). It constrains DNA mobility in the Ori macrodomain and limits long-distance DNA interactions with other chromosomal regions. The chain is Macrodomain Ori protein from Escherichia coli O157:H7.